Here is a 275-residue protein sequence, read N- to C-terminus: Digeranylgeranylglyceryl phosphate synthase (275 aa).

Transmembrane regions (helical) follow at residues 12 to 32, 35 to 55, 88 to 108, 125 to 145, 146 to 166, 200 to 220, 224 to 244, and 255 to 275; these read VHNV…ATTW, TPLF…GYVI, IVLF…PFGF, KLGL…AYYG, GLAS…IFFF, WIIA…PYFL, VIYL…LILH, and SLMK…SLRI.

The protein belongs to the UbiA prenyltransferase family. DGGGP synthase subfamily. The cofactor is Mg(2+).

The protein localises to the cell membrane. The enzyme catalyses sn-3-O-(geranylgeranyl)glycerol 1-phosphate + (2E,6E,10E)-geranylgeranyl diphosphate = 2,3-bis-O-(geranylgeranyl)-sn-glycerol 1-phosphate + diphosphate. The protein operates within membrane lipid metabolism; glycerophospholipid metabolism. Functionally, prenyltransferase that catalyzes the transfer of the geranylgeranyl moiety of geranylgeranyl diphosphate (GGPP) to the C2 hydroxyl of (S)-3-O-geranylgeranylglyceryl phosphate (GGGP). This reaction is the second ether-bond-formation step in the biosynthesis of archaeal membrane lipids. This is Digeranylgeranylglyceryl phosphate synthase from Sulfolobus acidocaldarius (strain ATCC 33909 / DSM 639 / JCM 8929 / NBRC 15157 / NCIMB 11770).